The sequence spans 118 residues: UPF0102 protein lpg2994 (118 aa).

This sequence belongs to the UPF0102 family.

The protein is UPF0102 protein lpg2994 of Legionella pneumophila subsp. pneumophila (strain Philadelphia 1 / ATCC 33152 / DSM 7513).